A 994-amino-acid chain; its full sequence is Regulator of telomere elongation helicase 1 homolog (994 aa).

A Helicase ATP-binding domain is found at 15-324 (SKTSIKFPFE…KLIENLRTED (310 aa)). An ATP-binding site is contributed by 50 to 57 (SPTGTGKT). The [4Fe-4S] cluster site is built by cysteine 142, cysteine 160, cysteine 169, and cysteine 208. The short motif at 251 to 254 (DEAH) is the DEAH box element. Positions 818–831 (KIEKKEKIEPRPIK) are enriched in basic and acidic residues. Residues 818-896 (KIEKKEKIEP…HVVSGSEPPK (79 aa)) are disordered. Residues 833–844 (DSSSSSVFSLPT) are compositionally biased toward polar residues. Residues 847–856 (DELKVKKWEQ) show a composition bias toward basic and acidic residues. Polar residues-rich tracts occupy residues 859–869 (DSQTNVSSSSD) and 880–889 (PGNSSGQHVV).

It belongs to the helicase family. RAD3/XPD subfamily.

It localises to the nucleus. The enzyme catalyses ATP + H2O = ADP + phosphate + H(+). Functionally, a probable ATP-dependent DNA helicase implicated in DNA repair and the maintenance of genomic stability. Acts as an anti-recombinase to counteract toxic recombination and limit crossover during meiosis. Regulates meiotic recombination and crossover homeostasis by physically dissociating strand invasion events and thereby promotes noncrossover repair by meiotic synthesis dependent strand annealing (SDSA) as well as disassembly of D loop recombination intermediates. This Caenorhabditis briggsae protein is Regulator of telomere elongation helicase 1 homolog.